The primary structure comprises 178 residues: Putative metal-dependent hydrolase GTNG_0529 (178 aa).

His68, His161, and His165 together coordinate Zn(2+).

It belongs to the metal hydrolase YfiT family. Homodimer. The cofactor is Zn(2+).

Its subcellular location is the cytoplasm. Possible metal-dependent hydrolase. The polypeptide is Putative metal-dependent hydrolase GTNG_0529 (Geobacillus thermodenitrificans (strain NG80-2)).